A 265-amino-acid polypeptide reads, in one-letter code: Thiazole synthase (265 aa).

Catalysis depends on Lys-106, which acts as the Schiff-base intermediate with DXP. 1-deoxy-D-xylulose 5-phosphate-binding positions include Gly-167, 193 to 194 (AG), and 215 to 216 (NS).

It belongs to the ThiG family. In terms of assembly, homotetramer. Forms heterodimers with either ThiH or ThiS.

It is found in the cytoplasm. It catalyses the reaction [ThiS sulfur-carrier protein]-C-terminal-Gly-aminoethanethioate + 2-iminoacetate + 1-deoxy-D-xylulose 5-phosphate = [ThiS sulfur-carrier protein]-C-terminal Gly-Gly + 2-[(2R,5Z)-2-carboxy-4-methylthiazol-5(2H)-ylidene]ethyl phosphate + 2 H2O + H(+). It participates in cofactor biosynthesis; thiamine diphosphate biosynthesis. Catalyzes the rearrangement of 1-deoxy-D-xylulose 5-phosphate (DXP) to produce the thiazole phosphate moiety of thiamine. Sulfur is provided by the thiocarboxylate moiety of the carrier protein ThiS. In vitro, sulfur can be provided by H(2)S. The protein is Thiazole synthase of Prochlorococcus marinus (strain MIT 9515).